Here is a 551-residue protein sequence, read N- to C-terminus: Glucans biosynthesis protein D (551 aa).

Residues 1-32 constitute a signal peptide (tat-type signal); the sequence is MNRRRFIKGSMAMAAVCGSSGIASLFSQAAFA.

It belongs to the OpgD/OpgG family. Predicted to be exported by the Tat system. The position of the signal peptide cleavage has not been experimentally proven.

It is found in the periplasm. It functions in the pathway glycan metabolism; osmoregulated periplasmic glucan (OPG) biosynthesis. In terms of biological role, probably involved in the control of the structural glucose backbone of osmoregulated periplasmic glucans (OPGs). This chain is Glucans biosynthesis protein D, found in Salmonella paratyphi A (strain ATCC 9150 / SARB42).